Here is a 353-residue protein sequence, read N- to C-terminus: MKIAVDAMGGDHAPEALIEGALLAGPQCSADILVIGNEARLSSLLAHSGDSTSLKVVHAPQVIGMGEAGPMALRRKREASLTIAMRLLAENEVDAVVSAGNSSAVVSAARHLVGLIPGLRRPAMAVPLPTPSGKLLLLDAGAHAEATAIHLAQSAVLAHCYLKIEEGLNRPRIGLLNIGHEPAKGNRAVQRAFALLRRCSLEFTGNVEPNDLFAGKVDAVICDGFVGNVLLKMYEGFSETVCRFLESLANHDGRDFSGGAGRILERFRRDYHYEFVGGAPLLGIRKTVVAAHGRSRATAIANAIRLACRLQEARVFERLAGIVEEDGALTELRHQNTLLMIDQLKDKWGFAHR.

The protein belongs to the PlsX family. Homodimer. Probably interacts with PlsY.

The protein localises to the cytoplasm. It catalyses the reaction a fatty acyl-[ACP] + phosphate = an acyl phosphate + holo-[ACP]. Its pathway is lipid metabolism; phospholipid metabolism. Functionally, catalyzes the reversible formation of acyl-phosphate (acyl-PO(4)) from acyl-[acyl-carrier-protein] (acyl-ACP). This enzyme utilizes acyl-ACP as fatty acyl donor, but not acyl-CoA. The chain is Phosphate acyltransferase from Syntrophobacter fumaroxidans (strain DSM 10017 / MPOB).